The following is a 361-amino-acid chain: tRNA N6-adenosine threonylcarbamoyltransferase (361 aa).

Fe cation is bound by residues His110 and His114. Substrate-binding positions include 132–136 (LVSGG), Asp165, Gly178, Asp182, and Asn284. Asp312 contacts Fe cation.

It belongs to the KAE1 / TsaD family. Fe(2+) is required as a cofactor.

It is found in the cytoplasm. It catalyses the reaction L-threonylcarbamoyladenylate + adenosine(37) in tRNA = N(6)-L-threonylcarbamoyladenosine(37) in tRNA + AMP + H(+). Required for the formation of a threonylcarbamoyl group on adenosine at position 37 (t(6)A37) in tRNAs that read codons beginning with adenine. Is involved in the transfer of the threonylcarbamoyl moiety of threonylcarbamoyl-AMP (TC-AMP) to the N6 group of A37, together with TsaE and TsaB. TsaD likely plays a direct catalytic role in this reaction. This Desulfovibrio desulfuricans (strain ATCC 27774 / DSM 6949 / MB) protein is tRNA N6-adenosine threonylcarbamoyltransferase.